A 411-amino-acid polypeptide reads, in one-letter code: MDGLPGRALGAACLLLLVAGWLGPEAWGSPTPPPSPAAPPPPPPPGAPGGSQDTCTSCGGGGGGFRRPEELGRVDGDFLEAVKRHILSRLQLRGRPNITHAVPKAAMVTALRKLHAGKVREDGRVEIPHLDGHASPGADGQERVSEIISFAETDGLASSRVRLYFFVSNEGNQNLFVVQASLWLYLKLLPYVLEKGSRRKVRVKVYFQEQGHGDRWNVVEKKVDLKRSGWHTFPITEAIQALFERGERRLNLDVQCDSCQELAVVPVFVDPGEESHRPFVVVQARLGDSRHRIRKRGLECDGRTSLCCRQQFFIDFRLIGWNDWIIAPTGYYGNYCEGSCPAYLAGVPGSASSFHTAVVNQYRMRGLNPGPVNSCCIPTKLSSMSMLYFDDEYNIVKRDVPNMIVEECGCA.

Positions 1–28 are cleaved as a signal peptide; the sequence is MDGLPGRALGAACLLLLVAGWLGPEAWG. The tract at residues 28–69 is disordered; that stretch reads GSPTPPPSPAAPPPPPPPGAPGGSQDTCTSCGGGGGGFRRPE. Positions 29-296 are excised as a propeptide; it reads SPTPPPSPAA…GDSRHRIRKR (268 aa). Over residues 30 to 47 the composition is skewed to pro residues; the sequence is PTPPPSPAAPPPPPPPGA. A glycan (N-linked (GlcNAc...) asparagine) is linked at asparagine 97. 4 cysteine pairs are disulfide-bonded: cysteine 300/cysteine 308, cysteine 307/cysteine 376, cysteine 336/cysteine 408, and cysteine 340/cysteine 410.

Belongs to the TGF-beta family. In terms of assembly, dimeric, linked by one or more disulfide bonds. Inhibin B is a dimer of alpha and beta-B. Activin B is a homodimer of beta-B. Activin AB is a dimer of beta-A and beta-B. Interacts with FST and FSTL3. Activin B interacts with BMPR2. Uterus, testis, ovary, lung, kidney, brain, CJ7 embryonic stem cells, and possibly in liver.

It is found in the secreted. Its function is as follows. Inhibins and activins inhibit and activate, respectively, the secretion of follitropin by the pituitary gland. Inhibins/activins are involved in regulating a number of diverse functions such as hypothalamic and pituitary hormone secretion, gonadal hormone secretion, germ cell development and maturation, erythroid differentiation, insulin secretion, nerve cell survival, embryonic axial development or bone growth, depending on their subunit composition. Inhibins appear to oppose the functions of activins. In terms of biological role, activin B is a dimer of alpha and beta-B that plays a role in several essential biological processes including embryonic development, stem cell maintenance and differentiation, haematopoiesis, cell proliferation and wound healing. Signals through type I receptor ACVR1C, abundantly expressed in pancreatic beta cells, and type II receptors like ACVR2A. Upon ligand binding, these receptors phosphorylate intracellular signaling mediators SMAD2 and SMAD3, which form a complex with SMAD4, translocate to the nucleus, and regulate gene expression. Plays a crucial role in the induction of hepcidin by inflammation through activation of ACVR1C and subsequent phosphorylation of SMAD1/5/8. Regulates adipocyte lipid metabolism by decreasing non-esterified fatty acids and glycerol release and increases intracellular triglyceride content. Stimulates wound healing by promoting cell migration and hair follicle regeneration through the JNK and ERK signaling pathways downstream of RHOA. Functionally, inhibin B is a dimer of alpha and beta-B that plays a crucial role in the regulation of the reproductive system by inhibiting the secretion of follicle-stimulating hormone (FSH) from the anterior pituitary gland. Thereby, maintains reproductive homeostasis in both males and females. Acts as a more potent suppressor of FSH release than inhibin A. Functions as competitive receptor antagonist binding activin type II receptors with high affinity in the presence of the TGF-beta type III coreceptor/TGFBR3L. The chain is Inhibin beta B chain (Inhbb) from Mus musculus (Mouse).